The following is a 983-amino-acid chain: MTISTTSSSTSSKTSSEKGDDLKGFSSSSSPASSRSSSATTPEPSSPTVLAAKTIESIDPFQPRKDYNENVLPAIPATEAVQPLTSDANTPDHWIARDERMIRLTGKHPFNSEAPLSELFSKGFLTPQNLFYVRSHGDTPRVTREQAENWKLKVHGLVEQEVELSIKDLKEKFPTVTLPITLVCAGNRRKEQNMVAKGLGFNWGAAGVSTGLFTGVYLADILDYCKPKNPLLSSFPSYDVAVPGRARHVVFEGADELPKGKYGTSQRLNWALDRCKGMLIAWGLNGEDLSPDHGYPLRLVVPGQIGGRMVKWLERIEVSDRESQHHLHFHDNKVLPTEVTADQARSEMHWWYDPKYIINDLNVNAAICSPDHDQVVNVAEPSTSSPQMLPLEGYAYTGGGRRIHRVEISLDDGHSWKCASIHYPEDLYRMYPIQGHEYFGTLDLSATEMSFSWCFWRLDVDVQADIIAKDVKVISVRALDEGLATMPRDMYWNATSMMNSWWFRVAVHREGENGNQIRFEHPTLAGNAPGGWMQRMNEAGLNPRYPQFGEAKAVESCKTDANTLAAAKEAKVDPKAIMIDPSKADTIITAADLAAHGDGEGPEPWFVVHGHVYDGTGFLKDHPGGDQSIRLVAGEDATEDFMAIHSMDAKKMLRDFHLGRLEKQDAAPPAATTEGEVLDLSKPFLDPKKWRATRLVSKQIISPDARIFRFALGSEDQELGLPVGQHVFVRVRSKNARTGETEMVQRAYTPYSGNTQRGFLDILIKVYFPSDAAATSAPAFEGGKMTMLLEKIDVSSPSDDLTIELKGPLGSFTYLGQQQIRWKPASAVRRVRKLAMIAGGSGITPIWSTLKAIADEVLDASNPSSPALDPIQIWIVYGNRTEQDILIREELERLRVALKGNLKVWHVLSNCTPENEANWSMGRGHITANVLRTHLPPPPAKPASEDELEDTLALVCGPPPMEKAVSDGLKQLGWDLQRCVVFF.

Low complexity-rich tracts occupy residues 1 to 14 (MTIS…SSKT) and 26 to 48 (SSSS…SSPT). Residues 1 to 50 (MTISTTSSSTSSKTSSEKGDDLKGFSSSSSPASSRSSSATTPEPSSPTVL) are disordered. Residue Cys-184 participates in Mo-molybdopterin binding. The 78-residue stretch at 585–662 (DTIITAADLA…LRDFHLGRLE (78 aa)) folds into the Cytochrome b5 heme-binding domain. His-622 and His-645 together coordinate heme. An FAD-binding FR-type domain is found at 688–815 (KKWRATRLVS…KGPLGSFTYL (128 aa)). Residues 746–749 (RAYT), 763–767 (LIKVY), Phe-768, Phe-780, 784–786 (KMT), Ser-841, and Thr-844 contribute to the FAD site. Residue 952–961 (LALVCGPPPM) coordinates NADP(+).

This sequence belongs to the nitrate reductase family. In terms of assembly, homodimer. FAD serves as cofactor. It depends on heme as a cofactor. The cofactor is Mo-molybdopterin.

It catalyses the reaction nitrite + NADP(+) + H2O = nitrate + NADPH + H(+). It participates in nitrogen metabolism; nitrate reduction (assimilation). Nitrate reductase is a key enzyme involved in the first step of nitrate assimilation in plants, fungi and bacteria. This chain is Nitrate reductase [NADPH] (NAR1), found in Mycosarcoma maydis (Corn smut fungus).